The primary structure comprises 515 residues: tRNA-2-methylthio-N(6)-dimethylallyladenosine synthase (515 aa).

One can recognise an MTTase N-terminal domain in the interval 25 to 140 (KTYQVRTFGC…LPALLNRARH (116 aa)). Positions 34, 69, 103, 177, 181, and 184 each coordinate [4Fe-4S] cluster. Positions 163–393 (RDSVYAGWVS…TALQDRIAAE (231 aa)) constitute a Radical SAM core domain. In terms of domain architecture, TRAM spans 396 to 466 (AKQLGRKVEV…AFHLVADPAG (71 aa)). The tract at residues 482-515 (DRSQADSCGVPAAGAASGKAGVSLGMPSLPTRRA) is disordered. The span at 490 to 506 (GVPAAGAASGKAGVSLG) shows a compositional bias: low complexity.

This sequence belongs to the methylthiotransferase family. MiaB subfamily. In terms of assembly, monomer. [4Fe-4S] cluster is required as a cofactor.

It is found in the cytoplasm. It catalyses the reaction N(6)-dimethylallyladenosine(37) in tRNA + (sulfur carrier)-SH + AH2 + 2 S-adenosyl-L-methionine = 2-methylsulfanyl-N(6)-dimethylallyladenosine(37) in tRNA + (sulfur carrier)-H + 5'-deoxyadenosine + L-methionine + A + S-adenosyl-L-homocysteine + 2 H(+). Its function is as follows. Catalyzes the methylthiolation of N6-(dimethylallyl)adenosine (i(6)A), leading to the formation of 2-methylthio-N6-(dimethylallyl)adenosine (ms(2)i(6)A) at position 37 in tRNAs that read codons beginning with uridine. The sequence is that of tRNA-2-methylthio-N(6)-dimethylallyladenosine synthase from Paenarthrobacter aurescens (strain TC1).